The chain runs to 648 residues: Serine/threonine-protein kinase PrkC (648 aa).

Residues 1 to 330 (MLIGKRISGR…KKNGKRKKWP (330 aa)) are Cytoplasmic-facing. The 261-residue stretch at 11–271 (YQILRVIGGG…DMEADIKTAF (261 aa)) folds into the Protein kinase domain. ATP-binding positions include 17–25 (IGGGGMANV) and Lys40. Residue Asp134 is the Proton acceptor of the active site. Phosphothreonine; by autocatalysis occurs at positions 162, 163, 165, and 167. A Phosphoserine; by autocatalysis modification is found at Ser214. Residues Thr290, Thr313, and Thr320 each carry the phosphothreonine; by autocatalysis modification. A helical membrane pass occupies residues 331–351 (WVLLTICLVFITAGILAVTVF). Over 352–648 (PSLFMPKDVK…YKTIEYPKDE (297 aa)) the chain is Extracellular. PASTA domains lie at 356–424 (MPKD…YKST), 425–492 (GKAK…TVSI), and 493–559 (GPED…TFSL).

This sequence belongs to the protein kinase superfamily. Ser/Thr protein kinase family. Homodimer. Post-translationally, autophosphorylation on threonine residue(s) and serine residue considerably increases the kinase activity of the protein. Dephosphorylated in vitro by PrpC.

It localises to the spore membrane. It catalyses the reaction L-seryl-[protein] + ATP = O-phospho-L-seryl-[protein] + ADP + H(+). The catalysed reaction is L-threonyl-[protein] + ATP = O-phospho-L-threonyl-[protein] + ADP + H(+). With respect to regulation, bryostatin activates PrkC activity and induces germination, whereas staurosporine inhibits PrkC and significantly reduced peptidoglycan-dependent germination. Kinase activity of isolated N-terminus stimulated by poly-L-lysine or myelin basic protein. Functionally, protein kinase that is responsible for triggering spore germination in response to muropeptides, signaling bacteria to exit dormancy. PrkC is thus a germination receptor that binds peptidoglycan fragments containing m-Dpm (meso-diaminopimelate), which act as spore germinants. Autophosphorylates and phosphorylates EF-G (elongation factor G, fusA); the latter modification is likely necessary for germination in response to peptidoglycan. Another group did not detect phosphorylation of EF-G. PrkC is a substrate in vitro of the cotranscribed phosphatase PrpC, which suggests that they form a functional couple in vivo. Might also be involved in sporulation and biofilm formation. Does not seem to be involved in stress response. The polypeptide is Serine/threonine-protein kinase PrkC (prkC) (Bacillus subtilis (strain 168)).